The following is a 225-amino-acid chain: MHLAEGVLPLGWCAFWNALALPFVAIALHLLRRRTEQDAFYKPFVGLIAAAVFAISCMPVPVPTAGTCSHPCGTGLAAVLIGPWMTVLVTVVALLIQALFLAHGGLTTLGADVASMGIAGAFTGYFAFHLARRSGANLWVAGFLAGVTSDWATYATTALALALGLSGEGSVTSMFTGVALAFVPTQLPLGLLEGVMTAGALAFLRARRPDILDRLQVVRLAPGAS.

6 helical membrane-spanning segments follow: residues V7–A27, P43–P63, L76–I96, T108–F128, F143–L163, and F175–V195.

Belongs to the CbiM family. In terms of assembly, forms an energy-coupling factor (ECF) transporter complex composed of an ATP-binding protein (A component, CbiO), a transmembrane protein (T component, CbiQ) and 2 possible substrate-capture proteins (S components, CbiM and CbiN) of unknown stoichimetry.

The protein localises to the cell inner membrane. It participates in cofactor biosynthesis; adenosylcobalamin biosynthesis. In terms of biological role, part of the energy-coupling factor (ECF) transporter complex CbiMNOQ involved in cobalt import. This Sorangium cellulosum (strain So ce56) (Polyangium cellulosum (strain So ce56)) protein is Cobalt transport protein CbiM.